The sequence spans 5596 residues: Midasin (5596 aa).

An N-acetylmethionine modification is found at Met-1. 4 AAA-ATPase protomer regions span residues Ser-307–Leu-591, Leu-659–Pro-978, Lys-1048–Ile-1316, and His-1362–Gly-1616. Gly-329 to Thr-336 provides a ligand contact to ATP. Positions Ser-517–Arg-537 are disordered. ATP-binding positions include Gly-677–Thr-684 and Gly-1084–Thr-1091. Thr-1177 is subject to Phosphothreonine. Residue Gly-1390–Thr-1397 coordinates ATP. Residue Lys-1683 is modified to N6-acetyllysine. 2 AAA-ATPase protomer regions span residues Arg-1738–Lys-1995 and Met-2053–Ser-2313. ATP is bound by residues Gly-1753 to Thr-1760 and Gly-2066 to Thr-2073. Ser-1754 bears the Phosphoserine mark. The segment at Ser-2418–Asp-4691 is linker. The interval Leu-3989–Ala-4008 is disordered. Phosphothreonine is present on Thr-4212. Residue Ser-4538 is modified to Phosphoserine. Disordered regions lie at residues Ala-4669–Asp-4688 and Glu-4700–Ser-5260. Over residues Thr-4702 to Asp-4724 the composition is skewed to basic and acidic residues. Residues Glu-4741 to Gly-4757 are compositionally biased toward acidic residues. Residues Ser-4752 and Ser-4754 each carry the phosphoserine modification. Positions Asp-4758 to Gly-4780 are enriched in basic and acidic residues. Positions Asp-4781–Lys-4794 are enriched in acidic residues. Basic and acidic residues predominate over residues Asn-4822–Lys-4834. Over residues Glu-4835–Gln-4844 the composition is skewed to acidic residues. Residues Gly-4845 to Glu-4855 are compositionally biased toward basic and acidic residues. A compositionally biased stretch (acidic residues) spans Glu-4877–Asp-4888. The residue at position 4889 (Ser-4889) is a Phosphoserine. A compositionally biased stretch (acidic residues) spans Glu-4896–Pro-4908. At Thr-4898 the chain carries Phosphothreonine. A compositionally biased stretch (basic and acidic residues) spans Leu-4909–Thr-4928. Phosphoserine is present on residues Ser-4937 and Ser-4946. Positions Glu-4940 to Gly-4966 are enriched in acidic residues. Basic and acidic residues predominate over residues Ala-4968–Glu-4989. Residues Gln-5007 to Val-5021 are compositionally biased toward acidic residues. The residue at position 5015 (Ser-5015) is a Phosphoserine. Residues Cys-5033–Ala-5046 are compositionally biased toward polar residues. Residues Pro-5054–Gly-5064 are compositionally biased toward basic and acidic residues. Residues Lys-5088–Pro-5101 show a composition bias toward basic residues. Over residues Asp-5105–Glu-5115 the composition is skewed to basic and acidic residues. The segment covering Gln-5132 to Gln-5141 has biased composition (low complexity). Over residues Gln-5181–Glu-5197 the composition is skewed to acidic residues. Composition is skewed to basic and acidic residues over residues Glu-5198 to Lys-5213 and Lys-5233 to Ser-5260. Residues Gln-5384–Leu-5583 enclose the VWFA domain.

Belongs to the midasin family. As to quaternary structure, associates with pre-60S ribosomes in the nucleoplasm. Interacts (via its hexameric AAA ATPase ring) with the PELP1 complex (via PELP1); the interaction is regulated by SUMO conjugation of PELP1 and is crucial for recruitment of MDN1 to the pre-ribosomal particle. Interacts (via VWFA/MIDAS domain) with WDR12 (via UBL domain). Interacts (via VWFA/MIDAS domain) with NLE1 (via UBL domain).

The protein localises to the nucleus. It is found in the nucleolus. It localises to the nucleoplasm. Its subcellular location is the cytoplasm. Nuclear chaperone required for maturation and nuclear export of pre-60S ribosome subunits. Functions at successive maturation steps to remove ribosomal factors at critical transition points, first driving the exit of early pre-60S particles from the nucleolus and then driving late pre-60S particles from the nucleus. At an early stage in 60S maturation, mediates the dissociation of the PeBoW complex (PES1-BOP1-WDR12) from early pre-60S particles, rendering them competent for export from the nucleolus to the nucleoplasm. Subsequently recruited to the nucleoplasmic particles through interaction with SUMO-conjugated PELP1 complex. This binding is only possible if the 5S RNP at the central protuberance has undergone the rotation to complete its maturation. The chain is Midasin (MDN1) from Homo sapiens (Human).